Here is a 596-residue protein sequence, read N- to C-terminus: Elongation factor 4 (596 aa).

Residues 2–184 form the tr-type G domain; it reads RNIRNFSIIA…AIVHRIPPPK (183 aa). GTP-binding positions include 14 to 19 and 131 to 134; these read DHGKST and NKID.

This sequence belongs to the TRAFAC class translation factor GTPase superfamily. Classic translation factor GTPase family. LepA subfamily.

It is found in the cell inner membrane. It catalyses the reaction GTP + H2O = GDP + phosphate + H(+). In terms of biological role, required for accurate and efficient protein synthesis under certain stress conditions. May act as a fidelity factor of the translation reaction, by catalyzing a one-codon backward translocation of tRNAs on improperly translocated ribosomes. Back-translocation proceeds from a post-translocation (POST) complex to a pre-translocation (PRE) complex, thus giving elongation factor G a second chance to translocate the tRNAs correctly. Binds to ribosomes in a GTP-dependent manner. The chain is Elongation factor 4 from Xanthomonas euvesicatoria pv. vesicatoria (strain 85-10) (Xanthomonas campestris pv. vesicatoria).